The chain runs to 729 residues: MSKSVVIAEKPSVARDIARVLKCDKKGNGYLEGSKYIVTWALGHLVTLADPESYDVKYKKWNLEDLPMLPERLKLTVIKQTGKQFNAVKSQLLRKDVNEIIVATDAGREGELVARWIIDKVKLNKPIKRLWISSVTDKAIKDGFANLKPGKAYDNLYASAVARSEADWYIGLNATRALTTRFNAQLNCGRVQTPTVAMIASREDEIKNFKAQTYYGIEAQTMEKLKLTWQDANGNSRSFNKEKIDGIVKRLDKQNATVVEIDKKQKKSFSPGLYDLTELQRDANKKFGYSAKETLNIMQKLYEQHKVLTYPRTDSRYISSDIVGTLPERLKACGVGEYRPFAHKVLQKPIKPNKSFVDDSKVSDHHAIIPTEGYVNFSAFTDKERKIYDLVVKRFLAVLFPAFEYEQLTLRTKVGNETFIARGKTILHAGWKEVYENRFEDDDVTDDVKEQLLPHIEKGDTLAVKLIMQTSGQTKAPARFNEATLLSAMENPTKYMDTQNKQLADTLKSTGGLGTVATRADIIDKLFNSFLIEKRGKDIHITSKGRQLLDLVPEELKSPTLTGEWEQKLEAIAKGKLKKEVFISEMKNYTKEIVSEIKSSDKKYKHDNISTKSCPDCGKPMLEVNGKKGKMLVCQDRECGHRKNVSRTTNARCPQCKKKLELRGEGAGQIFACKCGYREKLSTFQERRKKESGNKADKRDVQKYMKQQNKEEEPLNNPFAEALKKLKFD.

A Toprim domain is found at 3–136 (KSVVIAEKPS…IKRLWISSVT (134 aa)). The Mg(2+) site is built by glutamate 9 and aspartate 105. Residues 153–594 (YDNLYASAVA…EMKNYTKEIV (442 aa)) enclose the Topo IA-type catalytic domain. Residues 187–192 (NCGRVQ) form an interaction with DNA region. The active-site O-(5'-phospho-DNA)-tyrosine intermediate is tyrosine 310. The span at 686-713 (ERRKKESGNKADKRDVQKYMKQQNKEEE) shows a compositional bias: basic and acidic residues. A disordered region spans residues 686–719 (ERRKKESGNKADKRDVQKYMKQQNKEEEPLNNPF).

Belongs to the type IA topoisomerase family. Mg(2+) is required as a cofactor.

The enzyme catalyses ATP-independent breakage of single-stranded DNA, followed by passage and rejoining.. Functionally, releases the supercoiling and torsional tension of DNA, which is introduced during the DNA replication and transcription, by transiently cleaving and rejoining one strand of the DNA duplex. Introduces a single-strand break via transesterification at a target site in duplex DNA. The scissile phosphodiester is attacked by the catalytic tyrosine of the enzyme, resulting in the formation of a DNA-(5'-phosphotyrosyl)-enzyme intermediate and the expulsion of a 3'-OH DNA strand. The free DNA strand then undergoes passage around the unbroken strand, thus removing DNA supercoils. Finally, in the religation step, the DNA 3'-OH attacks the covalent intermediate to expel the active-site tyrosine and restore the DNA phosphodiester backbone. This is DNA topoisomerase 3 from Bacillus cereus (strain ATCC 14579 / DSM 31 / CCUG 7414 / JCM 2152 / NBRC 15305 / NCIMB 9373 / NCTC 2599 / NRRL B-3711).